Consider the following 101-residue polypeptide: MLTLAHYLVLGAILFAISIVGIFLNRRNVIIILMAIELMLLAVNTNFVAFSHYLGDVHGQIFVFFVLTVAAAEAAIGLAILVTLFRSLDTINVEDLDQLKG.

3 consecutive transmembrane segments (helical) span residues 4-24 (LAHY…GIFL), 30-50 (IIIL…FVAF), and 61-81 (IFVF…LAIL).

This sequence belongs to the complex I subunit 4L family. As to quaternary structure, NDH-1 is composed of 14 different subunits. Subunits NuoA, H, J, K, L, M, N constitute the membrane sector of the complex.

The protein localises to the cell inner membrane. It carries out the reaction a quinone + NADH + 5 H(+)(in) = a quinol + NAD(+) + 4 H(+)(out). Its function is as follows. NDH-1 shuttles electrons from NADH, via FMN and iron-sulfur (Fe-S) centers, to quinones in the respiratory chain. The immediate electron acceptor for the enzyme in this species is believed to be ubiquinone. Couples the redox reaction to proton translocation (for every two electrons transferred, four hydrogen ions are translocated across the cytoplasmic membrane), and thus conserves the redox energy in a proton gradient. The polypeptide is NADH-quinone oxidoreductase subunit K (Paraburkholderia xenovorans (strain LB400)).